The following is a 180-amino-acid chain: NADH-quinone oxidoreductase subunit I (180 aa).

4Fe-4S ferredoxin-type domains are found at residues 48 to 80 (IVLT…LQKA) and 90 to 119 (EFFR…LTPD). The [4Fe-4S] cluster site is built by C60, C63, C66, C70, C99, C102, C105, and C109.

Belongs to the complex I 23 kDa subunit family. As to quaternary structure, NDH-1 is composed of 13 different subunits. Subunits NuoA, H, J, K, L, M, N constitute the membrane sector of the complex. The cofactor is [4Fe-4S] cluster.

The protein localises to the cell inner membrane. The catalysed reaction is a quinone + NADH + 5 H(+)(in) = a quinol + NAD(+) + 4 H(+)(out). Functionally, NDH-1 shuttles electrons from NADH, via FMN and iron-sulfur (Fe-S) centers, to quinones in the respiratory chain. The immediate electron acceptor for the enzyme in this species is believed to be ubiquinone. Couples the redox reaction to proton translocation (for every two electrons transferred, four hydrogen ions are translocated across the cytoplasmic membrane), and thus conserves the redox energy in a proton gradient. In Erwinia tasmaniensis (strain DSM 17950 / CFBP 7177 / CIP 109463 / NCPPB 4357 / Et1/99), this protein is NADH-quinone oxidoreductase subunit I.